The chain runs to 479 residues: mRNA export factor ICP27 homolog (479 aa).

Low complexity predominate over residues 1-15 (MVPSQRLSRTSSISS). 2 disordered regions span residues 1-78 (MVPS…SSVV) and 92-210 (KWDL…NKPW). The segment covering 35-44 (TDCDMDPMEG) has biased composition (acidic residues). Positions 132 to 142 (EVHGCTDESYG) are enriched in basic and acidic residues. C354, H445, C449, and C454 together coordinate Zn(2+). The CHC2-type zinc finger occupies 354-454 (CFLPNTRDYN…HTRDCRSASC (101 aa)).

The protein belongs to the HHV-1 ICP27 protein family. Interacts with host XPO1 and with the XPO1 export pathway components small GTPase RAN and nucleoporin NUP214. Interacts with host SPEN, OTT1 and OTT3. Interacts with host SRSF1, SRSF3, SRSF7 and SRPK1. Interacts with host DHX9; this interaction may have an inhibitory effect on virion production. Interacts (via N-terminus) with host NXF1; this interaction plays a role in mRNA export. In terms of processing, phosphorylated by cellular protein kinase CK2.

It localises to the host nucleus. The protein resides in the host cytoplasm. In terms of biological role, promotes the nuclear export of a subset of early and late viral mRNAs by interacting with mRNAs and cellular export proteins. Additionally may prevent the establishment of cellular antiviral state, by acting as an alternative splicing factor for cellular RNAs such as STAT1, resulting in a STAT1 mRNA incapable of producing the STAT1alpha isoform. This chain is mRNA export factor ICP27 homolog, found in Homo sapiens (Human).